A 208-amino-acid polypeptide reads, in one-letter code: Ribosomal RNA large subunit methyltransferase E (208 aa).

G61, W63, D81, D97, and D122 together coordinate S-adenosyl-L-methionine. Residue K162 is the Proton acceptor of the active site.

The protein belongs to the class I-like SAM-binding methyltransferase superfamily. RNA methyltransferase RlmE family.

It is found in the cytoplasm. The catalysed reaction is uridine(2552) in 23S rRNA + S-adenosyl-L-methionine = 2'-O-methyluridine(2552) in 23S rRNA + S-adenosyl-L-homocysteine + H(+). Functionally, specifically methylates the uridine in position 2552 of 23S rRNA at the 2'-O position of the ribose in the fully assembled 50S ribosomal subunit. The protein is Ribosomal RNA large subunit methyltransferase E of Pseudomonas putida (strain GB-1).